Consider the following 214-residue polypeptide: Putative 3-methyladenine DNA glycosylase (214 aa).

The protein belongs to the DNA glycosylase MPG family.

The polypeptide is Putative 3-methyladenine DNA glycosylase (Mycobacterium leprae (strain Br4923)).